Here is a 1496-residue protein sequence, read N- to C-terminus: MIFSQGASPLKGDFSRIKFSIASPESILAHSRGEVLKPETINYRTFKPERDGLMCEKIFGPTKDWECYCGKYKRVRYKGIICDRCGVEVTTKSVRRERMGHISLAVPVVHTWFFRSVPSKIGALLDLSTKELERIIYYEVYVVINPGEPGEKQGIKKLDRLTEEQYFQIITEYEDNQDLDDTDSAKFVAKMGGEAIHMLLKSIDLNETAVTLRKVLRESSSEQKRADALKRLKVVESFRKSYEPQKKTRKKPGGLFPEDEIPEPYVYEGNKPEYMVMEVVPVIPPELRPLVPLEGGRFATSDLNDLYRRVIIRNNRLKKLIDIRAPEVILRNEKRMLQEAVDALFDNSRKANAVKTGESNRPLKSLSDALKGKQGRFRQNLLGKRVDYSGRSVIVVGPELKLHECGLPKSMAIELFQPFVIRRLVERGIAKSVKSAKKLIDKKDPIVWDVLEKVIDGRPVLLNRAPTLHRLGIQAFQPVLIEGKAIQIHPLVCTAFNADFDGDQMAVHVPLSQEAQLEASLLMLSSHNLILPQSGKPVTVPSQDMVLGMYYLTKSRSGEEGEGRIFYDSEDVLIAYNEQRVGLHAQIFVCFNGLVDQKFDPLRVLETVIDEKSEKYGWLRSQLEQKKMLLTTVGRVIFNQHVPESIGFINRVIDKKVAKELIGRLSSEVGNVETAKFLDNIKEVGFHYAMKGGLSVGLSDAIVPETKVRHIKSAQKDSTKVVKEYNRGTLTDNERYNQIVDVWQKTSNIVAEESYQKLKKDRDGFNPLYMMLDSGARGSREQVRQLTGMRGLIARPQKSMSGQPGEIIENPIISNLKEGLTVLEYFISTHGARKGLSDTSLKTADAGYLTRRLHDVAQDVIVTIDDCGTTRGLHVYRNIEEETSGQIKFREKIRGRVAARDIYDTLNNNVVVKAGEIITDELADLVQDTAGVEEAEIRSVLTCESKVGICSKCYGTNLSVHKLVEIGEAVGVIAAQSIGEPGTQLTLRTFHQGGTAQGGISETETKAFNEGVLEFEDVKTVEHSSINEDGVEDLRTIVIQKNGKINIVDPESGKVLKRYVIPHGAHLHCRPGNAVKKDQVLFSSEPNSTQIIAETPGSVRFADIEKGVTYKEEVDPQTGFAQHTIINWRSKLRANETREPRIMIIDASGEIRKTYPVPIKSNLYVEDGQKVLPGDIIAKVPRNLDRVGGDITAGLPKVTELFEARIPSDPAIVSEIDGYVSFGSQRRSSKEIKVKNDFGEEKIYYVQVGKHVLANEGDEVKAGDPMTDGAVSPQDILRIQGPNAVQQYLVNEIQKVYQINAGVEINDKHLEVIVRQMLQKVRVEEPGDTELLPGDLIDRSAFIEANENIAEKVRVTDKGDAPARIQDGQLCKMRDIAKLNRELRKNSKKLVVIEPTLQATSHPVLLGITSAALQTESVISAASFQETTKVLTDAAVAGKIDNLLGLKENVIVGKLIPAGTGLKRYRTIRLTGDTQKQAAVAEAVAAPDKEIEGHGI.

Zn(2+) is bound by residues Cys67, Cys69, Cys82, and Cys85. Residues Asp499, Asp501, and Asp503 each coordinate Mg(2+). Zn(2+) is bound by residues Cys867, Cys943, Cys950, and Cys953.

Belongs to the RNA polymerase beta' chain family. The RNAP catalytic core consists of 2 alpha, 1 beta, 1 beta' and 1 omega subunit. When a sigma factor is associated with the core the holoenzyme is formed, which can initiate transcription. Mg(2+) serves as cofactor. Zn(2+) is required as a cofactor.

It carries out the reaction RNA(n) + a ribonucleoside 5'-triphosphate = RNA(n+1) + diphosphate. In terms of biological role, DNA-dependent RNA polymerase catalyzes the transcription of DNA into RNA using the four ribonucleoside triphosphates as substrates. This Chlorobium limicola (strain DSM 245 / NBRC 103803 / 6330) protein is DNA-directed RNA polymerase subunit beta'.